Consider the following 564-residue polypeptide: MLDYDEVTAFLGEWGTFQRLIFFLLSASIIPNGFTGLSAVFLTAIPEHRCRIPDTVNLSSAWRNHSIPMETKDGPEVPQKCRRYRLATIANFSELGLEPGRDVDLEQLEQENCLDGWEYDKDIFLSTIVTEWDLVCKDDWKAPLTTSFFYVGVLLGSFISGQLSDRFGRKNILFLTMAMHTGFSFIQVFSVNFEMFTLLYTLVGMGHISNYVAAFVLGTEMLSKSVRIIFATLGVCIFFAFGFMVLPLFAYFIREWRRLLLAITLPGVLCGALWWFIPESPRWLISQGRIKEAEVIIRKAAKINGIVAPSTIFDPSETNKLQDDSSKKPQSHHIYDLVRTPNIRILTIMSIILWLTISVGYFGLSLDTPNLNGNIYVNCFLLAAVEVPAYVLAWLLLQHVSRRYSMAGSLFLGGSVLLLVQLVPSDLHYLSTTLVMVGKFGITSAYSMVYVYTAELYPTVVRNMGVGVSSTASRLGSILSPYFVYLGAYDRRLPYILMGSLTILTAIITLFFPESSGVSLPETIDEMQKVKKLKQRQSLSKKGSPKESKGNVSRTSRTSEPKGF.

The Cytoplasmic portion of the chain corresponds to 1–20 (MLDYDEVTAFLGEWGTFQRL). A helical membrane pass occupies residues 21–41 (IFFLLSASIIPNGFTGLSAVF). Topologically, residues 42 to 142 (LTAIPEHRCR…DLVCKDDWKA (101 aa)) are extracellular. Residues Asn57, Asn64, and Asn91 are each glycosylated (N-linked (GlcNAc...) asparagine). A helical membrane pass occupies residues 143–163 (PLTTSFFYVGVLLGSFISGQL). Over 164–172 (SDRFGRKNI) the chain is Cytoplasmic. A helical membrane pass occupies residues 173 to 193 (LFLTMAMHTGFSFIQVFSVNF). Residues 194-197 (EMFT) lie on the Extracellular side of the membrane. Residues 198–218 (LLYTLVGMGHISNYVAAFVLG) form a helical membrane-spanning segment. Position 218-225 (218-225 (GTEMLSKS)) interacts with ATP. Topologically, residues 219–232 (TEMLSKSVRIIFAT) are cytoplasmic. Residues 233–253 (LGVCIFFAFGFMVLPLFAYFI) form a helical membrane-spanning segment. The Extracellular segment spans residues 254–257 (REWR). The helical transmembrane segment at 258 to 278 (RLLLAITLPGVLCGALWWFIP) threads the bilayer. Topologically, residues 279 to 344 (ESPRWLISQG…YDLVRTPNIR (66 aa)) are cytoplasmic. The chain crosses the membrane as a helical span at residues 345-365 (ILTIMSIILWLTISVGYFGLS). The Extracellular segment spans residues 366 to 376 (LDTPNLNGNIY). A helical membrane pass occupies residues 377–397 (VNCFLLAAVEVPAYVLAWLLL). The Cytoplasmic portion of the chain corresponds to 398-409 (QHVSRRYSMAGS). The chain crosses the membrane as a helical span at residues 410 to 430 (LFLGGSVLLLVQLVPSDLHYL). The Extracellular portion of the chain corresponds to 431–433 (STT). A helical membrane pass occupies residues 434 to 454 (LVMVGKFGITSAYSMVYVYTA). The Cytoplasmic segment spans residues 455 to 465 (ELYPTVVRNMG). A helical membrane pass occupies residues 466 to 486 (VGVSSTASRLGSILSPYFVYL). The Extracellular portion of the chain corresponds to 487 to 491 (GAYDR). A helical transmembrane segment spans residues 492-512 (RLPYILMGSLTILTAIITLFF). The Cytoplasmic segment spans residues 513–564 (PESSGVSLPETIDEMQKVKKLKQRQSLSKKGSPKESKGNVSRTSRTSEPKGF). The tract at residues 532–564 (KLKQRQSLSKKGSPKESKGNVSRTSRTSEPKGF) is disordered.

The protein belongs to the major facilitator (TC 2.A.1) superfamily. Organic cation transporter (TC 2.A.1.19) family. Predominantly expressed in testis.

It localises to the peroxisome membrane. In terms of biological role, sodium-ion independent, medium affinity carnitine transporter. Also transports organic cations such as tetraethylammonium (TEA) without the involvement of sodium. Relative uptake activity ratio of carnitine to TEA is 746. This chain is Solute carrier family 22 member 21 (Slc22a21), found in Mus musculus (Mouse).